The following is a 231-amino-acid chain: tRNA1(Val) (adenine(37)-N6)-methyltransferase (231 aa).

This sequence belongs to the methyltransferase superfamily. tRNA (adenine-N(6)-)-methyltransferase family.

The protein resides in the cytoplasm. It carries out the reaction adenosine(37) in tRNA1(Val) + S-adenosyl-L-methionine = N(6)-methyladenosine(37) in tRNA1(Val) + S-adenosyl-L-homocysteine + H(+). Functionally, specifically methylates the adenine in position 37 of tRNA(1)(Val) (anticodon cmo5UAC). This chain is tRNA1(Val) (adenine(37)-N6)-methyltransferase, found in Flavobacteriaceae bacterium (strain 3519-10).